The sequence spans 440 residues: Protein CANDIDATE G-PROTEIN COUPLED RECEPTOR 7 (440 aa).

An N-terminal signal peptide occupies residues 1–24 (MAKMPLSVVVFLLFSAAFLAVSMA). 2 N-linked (GlcNAc...) asparagine glycosylation sites follow: Asn124 and Asn162. Helical transmembrane passes span 175 to 195 (LPTL…FWSY), 207 to 227 (IHLL…CAAE), 243 to 263 (ILFY…IILI), 281 to 301 (VLII…VIGE), and 315 to 335 (VFLL…VWSI). The N-linked (GlcNAc...) asparagine glycan is linked to Asn351. Helical transmembrane passes span 363–383 (IVVI…KTIA) and 390–410 (VSFA…FHMF).

It belongs to the LU7TM family.

It localises to the membrane. Its function is as follows. Plays a role in plants and microbes interactions. G-protein coupled receptor involved in root growth mediated by the bacterial quorum-sensing signals N-acyl-homoserine lactones (AHLs). In Arabidopsis thaliana (Mouse-ear cress), this protein is Protein CANDIDATE G-PROTEIN COUPLED RECEPTOR 7.